We begin with the raw amino-acid sequence, 368 residues long: Quinolinate synthase (368 aa).

The iminosuccinate site is built by H46 and S63. [4Fe-4S] cluster is bound at residue C110. Residues 141-143 (YVN) and S162 each bind iminosuccinate. Residue C230 participates in [4Fe-4S] cluster binding. Residues 256-258 (HPE) and T273 each bind iminosuccinate. Position 320 (C320) interacts with [4Fe-4S] cluster.

Belongs to the quinolinate synthase family. Type 3 subfamily. [4Fe-4S] cluster is required as a cofactor.

It is found in the cytoplasm. The catalysed reaction is iminosuccinate + dihydroxyacetone phosphate = quinolinate + phosphate + 2 H2O + H(+). It functions in the pathway cofactor biosynthesis; NAD(+) biosynthesis; quinolinate from iminoaspartate: step 1/1. Functionally, catalyzes the condensation of iminoaspartate with dihydroxyacetone phosphate to form quinolinate. The sequence is that of Quinolinate synthase from Bacillus cereus (strain ZK / E33L).